We begin with the raw amino-acid sequence, 391 residues long: Na(+)/H(+) antiporter NhaA (391 aa).

The next 11 membrane-spanning stretches (helical) occupy residues glycine 14–threonine 34, methionine 59–valine 79, alanine 95–phenylalanine 115, glycine 125–glycine 145, isoleucine 154–phenylalanine 174, serine 180–phenylalanine 200, valine 219–leucine 239, valine 254–valine 274, isoleucine 292–leucine 312, isoleucine 328–leucine 348, and leucine 357–tyrosine 377.

The protein belongs to the NhaA Na(+)/H(+) (TC 2.A.33) antiporter family.

It localises to the cell inner membrane. It carries out the reaction Na(+)(in) + 2 H(+)(out) = Na(+)(out) + 2 H(+)(in). Na(+)/H(+) antiporter that extrudes sodium in exchange for external protons. The chain is Na(+)/H(+) antiporter NhaA from Enterobacter sp. (strain 638).